The primary structure comprises 392 residues: Heavy metal-associated isoprenylated plant protein 6 (392 aa).

The segment covering 1 to 19 has biased composition (basic and acidic residues); it reads MGEKKEETATKPQGEKKPT. The tract at residues 1 to 22 is disordered; that stretch reads MGEKKEETATKPQGEKKPTDGG. The HMA 1 domain maps to 23-86; sequence ITTVVMKLDM…KVADKIKRPV (64 aa). Residues C34 and C37 each coordinate Cd(2+). Positions 89-157 are disordered; the sequence is VSTVAPPKKE…PPPPKESTVV (69 aa). Over residues 106 to 145 the composition is skewed to basic and acidic residues; the sequence is AEKKPSPAAEEKPAEKKPAAVEKPGEKKEEKKKEEGEKKA. An HMA 2 domain is found at 153–216; sequence ESTVVLKTKL…YLNEKLKRTV (64 aa). Cd(2+)-binding residues include C164 and C167. Residues 258–270 are compositionally biased toward basic and acidic residues; that stretch reads KKVDGGGEKKKEV. Disordered regions lie at residues 258–285 and 350–392; these read KKVD…GGDG and GQGY…CSVM. Residues 272 to 285 show a composition bias toward gly residues; sequence VGGGGGGGGGGGDG. C389 is subject to Cysteine methyl ester. A lipid anchor (S-farnesyl cysteine) is attached at C389. The propeptide at 390–392 is removed in mature form; it reads SVM.

This sequence belongs to the HIPP family. In terms of tissue distribution, expressed in petioles, hypocotyls, peduncles, vascular bundles and root meristems.

It localises to the cell membrane. Functionally, heavy-metal-binding protein. Involved in the maintenance of heavy metal homeostasis and/or in detoxification. In Arabidopsis thaliana (Mouse-ear cress), this protein is Heavy metal-associated isoprenylated plant protein 6.